A 418-amino-acid chain; its full sequence is Tyrosine--tRNA ligase (418 aa).

An L-tyrosine-binding site is contributed by Tyr-34. Positions 39 to 48 match the 'HIGH' region motif; that stretch reads PTADSLHLGH. 2 residues coordinate L-tyrosine: Tyr-169 and Gln-173. The 'KMSKS' region signature appears at 229–233; that stretch reads KFGKS. ATP is bound at residue Lys-232. Positions 352-418 constitute an S4 RNA-binding domain; that stretch reads LNLVDMLVTA…GKKKYAVLTY (67 aa).

This sequence belongs to the class-I aminoacyl-tRNA synthetase family. TyrS type 1 subfamily. As to quaternary structure, homodimer.

Its subcellular location is the cytoplasm. The enzyme catalyses tRNA(Tyr) + L-tyrosine + ATP = L-tyrosyl-tRNA(Tyr) + AMP + diphosphate + H(+). In terms of biological role, catalyzes the attachment of tyrosine to tRNA(Tyr) in a two-step reaction: tyrosine is first activated by ATP to form Tyr-AMP and then transferred to the acceptor end of tRNA(Tyr). This is Tyrosine--tRNA ligase from Streptococcus pyogenes serotype M6 (strain ATCC BAA-946 / MGAS10394).